The following is a 241-amino-acid chain: Geranylgeranylglyceryl phosphate synthase (241 aa).

Positions 26 and 52 each coordinate Mg(2+). Sn-glycerol 1-phosphate-binding positions include 172 to 178 (YFEAGSG), 204 to 205 (GG), and 226 to 227 (GT).

The protein belongs to the GGGP/HepGP synthase family. Group II subfamily. Mg(2+) is required as a cofactor.

Its subcellular location is the cytoplasm. The enzyme catalyses sn-glycerol 1-phosphate + (2E,6E,10E)-geranylgeranyl diphosphate = sn-3-O-(geranylgeranyl)glycerol 1-phosphate + diphosphate. It participates in membrane lipid metabolism; glycerophospholipid metabolism. Functionally, prenyltransferase that catalyzes the transfer of the geranylgeranyl moiety of geranylgeranyl diphosphate (GGPP) to the C3 hydroxyl of sn-glycerol-1-phosphate (G1P). This reaction is the first ether-bond-formation step in the biosynthesis of archaeal membrane lipids. The chain is Geranylgeranylglyceryl phosphate synthase from Hyperthermus butylicus (strain DSM 5456 / JCM 9403 / PLM1-5).